Here is a 76-residue protein sequence, read N- to C-terminus: uncharacterized protein (76 aa).

The chain crosses the membrane as a helical span at residues 20–42 (GIVWGPKLAPWGITLGLGAFYFF).

It is found in the membrane. This is an uncharacterized protein from Dictyostelium discoideum (Social amoeba).